The sequence spans 6668 residues: Centrosome-associated protein CEP250 (6668 aa).

20 coiled-coil regions span residues 562 to 589 (KAFH…LQQD), 632 to 666 (TREL…LRAS), 873 to 988 (HTEC…LRSS), 1042 to 1087 (LRMS…HEAA), 1252 to 1307 (VEDL…AVSR), 1333 to 1427 (LESL…LEKK), 1501 to 1538 (RPAA…LGTQ), 1594 to 1688 (REAL…SEVA), 1896 to 1930 (HDIL…TTEK), 1975 to 2224 (EETL…AKQS), 2298 to 3272 (AEDE…LKME), 3298 to 3436 (QQEL…SRAE), 3526 to 3599 (LVQL…AKEE), 3697 to 3773 (CASL…EERR), 3856 to 4137 (TEML…VEAE), 4170 to 4486 (RRKL…LRER), 4515 to 5078 (LETL…FRRR), 5165 to 5202 (LASL…QETL), 5298 to 5731 (LREK…QHRV), and 5927 to 6119 (TQAL…LWRQ).

Proteolytically cleaved; only the full-length form localizes to the inner core, while processed version also localizes to the outer core during the onset of cell division.

It localises to the cytoplasm. The protein localises to the cytoskeleton. It is found in the microtubule organizing center. Its subcellular location is the centrosome. Part of the centrosome inner core complex. Required for the linking of centrosomal inner and outer cores. This is Centrosome-associated protein CEP250 from Toxoplasma gondii (strain ATCC 50611 / Me49).